A 255-amino-acid chain; its full sequence is Imidazole glycerol phosphate synthase subunit HisF (255 aa).

Catalysis depends on residues Asp-11 and Asp-130.

This sequence belongs to the HisA/HisF family. As to quaternary structure, heterodimer of HisH and HisF.

It localises to the cytoplasm. The enzyme catalyses 5-[(5-phospho-1-deoxy-D-ribulos-1-ylimino)methylamino]-1-(5-phospho-beta-D-ribosyl)imidazole-4-carboxamide + L-glutamine = D-erythro-1-(imidazol-4-yl)glycerol 3-phosphate + 5-amino-1-(5-phospho-beta-D-ribosyl)imidazole-4-carboxamide + L-glutamate + H(+). The protein operates within amino-acid biosynthesis; L-histidine biosynthesis; L-histidine from 5-phospho-alpha-D-ribose 1-diphosphate: step 5/9. Its function is as follows. IGPS catalyzes the conversion of PRFAR and glutamine to IGP, AICAR and glutamate. The HisF subunit catalyzes the cyclization activity that produces IGP and AICAR from PRFAR using the ammonia provided by the HisH subunit. This Maricaulis maris (strain MCS10) (Caulobacter maris) protein is Imidazole glycerol phosphate synthase subunit HisF.